Consider the following 25-residue polypeptide: Histone H4 (25 aa).

Over residues 1-14 (MSGRGKGGKGLGKG) the composition is skewed to gly residues. Residues 1 to 25 (MSGRGKGGKGLGKGGAKRHRKVLRD) form a disordered region. An N-acetylserine modification is found at Ser-2. Lys-6, Lys-9, Lys-13, Lys-17, and Lys-21 each carry N6-acetyllysine. The span at 15-25 (GAKRHRKVLRD) shows a compositional bias: basic residues. Residues 17-21 (KRHRK) mediate DNA binding.

The protein belongs to the histone H4 family. In terms of assembly, the nucleosome is a histone octamer containing two molecules each of H2A, H2B, H3 and H4 assembled in one H3-H4 heterotetramer and two H2A-H2B heterodimers. The octamer wraps approximately 147 bp of DNA.

Its subcellular location is the nucleus. It localises to the chromosome. Its function is as follows. Core component of nucleosome. Nucleosomes wrap and compact DNA into chromatin, limiting DNA accessibility to the cellular machineries which require DNA as a template. Histones thereby play a central role in transcription regulation, DNA repair, DNA replication and chromosomal stability. DNA accessibility is regulated via a complex set of post-translational modifications of histones, also called histone code, and nucleosome remodeling. This is Histone H4 from Medicago sativa (Alfalfa).